Consider the following 88-residue polypeptide: Small ribosomal subunit protein uS17 (88 aa).

The protein belongs to the universal ribosomal protein uS17 family. Part of the 30S ribosomal subunit.

One of the primary rRNA binding proteins, it binds specifically to the 5'-end of 16S ribosomal RNA. The chain is Small ribosomal subunit protein uS17 from Stutzerimonas stutzeri (strain A1501) (Pseudomonas stutzeri).